The primary structure comprises 73 residues: Large ribosomal subunit protein bL31 (73 aa).

Zn(2+) is bound by residues C16, C18, C37, and C40.

Belongs to the bacterial ribosomal protein bL31 family. Type A subfamily. Part of the 50S ribosomal subunit. The cofactor is Zn(2+).

In terms of biological role, binds the 23S rRNA. The protein is Large ribosomal subunit protein bL31 of Pseudomonas syringae pv. syringae (strain B728a).